Here is a 372-residue protein sequence, read N- to C-terminus: GTPase Obg (372 aa).

One can recognise an Obg domain in the interval 1–159 (MKFVDEATIE…RRLRLELKVL (159 aa)). Positions 160 to 336 (ADVGLLGLPN…LIWALQDYLD (177 aa)) constitute an OBG-type G domain. Residues 166–173 (GLPNAGKS), 191–195 (FTTLH), 213–216 (DIPG), 288–291 (NKLD), and 317–319 (SGL) contribute to the GTP site. Residues Ser-173 and Thr-193 each coordinate Mg(2+). Residues 341–372 (KEQITQDKADGSYVHEDPRFDTTRDAPPSGKD) form a disordered region.

Belongs to the TRAFAC class OBG-HflX-like GTPase superfamily. OBG GTPase family. In terms of assembly, monomer. Mg(2+) serves as cofactor.

The protein localises to the cytoplasm. Its function is as follows. An essential GTPase which binds GTP, GDP and possibly (p)ppGpp with moderate affinity, with high nucleotide exchange rates and a fairly low GTP hydrolysis rate. Plays a role in control of the cell cycle, stress response, ribosome biogenesis and in those bacteria that undergo differentiation, in morphogenesis control. The sequence is that of GTPase Obg from Bordetella avium (strain 197N).